We begin with the raw amino-acid sequence, 294 residues long: ADP-ribosyl-[dinitrogen reductase] glycohydrolase (294 aa).

ADP-D-ribose contacts are provided by residues 100–102, Glu-121, His-158, and Tyr-212; that span reads NTC. Residues Asp-243, Asp-245, and Thr-246 each contribute to the Mn(2+) site.

It belongs to the ADP-ribosylglycohydrolase family. As to quaternary structure, monomer. It depends on Mn(2+) as a cofactor.

It is found in the cytoplasm. The catalysed reaction is N(omega)-alpha-(ADP-D-ribosyl)-L-arginyl-[dinitrogen reductase] + H2O = L-arginyl-[dinitrogen reductase] + ADP-D-ribose. In terms of biological role, involved in the regulation of nitrogen fixation activity by the reversible ADP-ribosylation of one subunit of the homodimeric dinitrogenase reductase component of the nitrogenase enzyme complex. The ADP-ribosyltransferase (DraT) transfers the ADP-ribose group from NAD to dinitrogenase reductase. The ADP-ribose group is removed through the action of the ADP-ribosylglycohydrolase (DraG, this entry). In Rhodospirillum rubrum, this protein is ADP-ribosyl-[dinitrogen reductase] glycohydrolase.